Consider the following 643-residue polypeptide: Inorganic pyrophosphatase TTM1 (643 aa).

A mitochondrion-targeting transit peptide spans 1–15 (MALDSSVALSPRRRH). The CYTH domain maps to 248 to 410 (NPTYILKSSK…PHTYIEQIQL (163 aa)). A helical membrane pass occupies residues 618–638 (LESSTVPILLGLAIGCVGIFA).

Mg(2+) is required as a cofactor. In terms of tissue distribution, ubiquitously expressed in all tissues, with strong expression detected in senescent leaves.

It is found in the mitochondrion outer membrane. The enzyme catalyses diphosphate + H2O = 2 phosphate + H(+). In terms of biological role, exhibits pyrophosphatase activity with stronger affinity for pyrophosphate (PPi), moderate affinity for ATP and ADP, and weak affinity for tripolyphosphate (PPPi). No activity observed toward uridine substrate. Positively regulates natural and dark-induced leaf senescence. The sequence is that of Inorganic pyrophosphatase TTM1 from Arabidopsis thaliana (Mouse-ear cress).